Here is a 143-residue protein sequence, read N- to C-terminus: Ribonuclease P protein component 2 (143 aa).

The protein belongs to the eukaryotic/archaeal RNase P protein component 2 family. Consists of a catalytic RNA component and at least 4-5 protein subunits.

It localises to the cytoplasm. The enzyme catalyses Endonucleolytic cleavage of RNA, removing 5'-extranucleotides from tRNA precursor.. In terms of biological role, part of ribonuclease P, a protein complex that generates mature tRNA molecules by cleaving their 5'-ends. The chain is Ribonuclease P protein component 2 from Saccharolobus solfataricus (strain ATCC 35092 / DSM 1617 / JCM 11322 / P2) (Sulfolobus solfataricus).